The following is a 143-amino-acid chain: Histone H2B.2, sperm (143 aa).

The interval 1-49 is disordered; the sequence is MPKSPSKSSPRKGSPRKGSPRKGSPKRGGKGAKRAGKGGRRNVVKRRRR. Short sequence motifs (SPKK motif) lie at residues 4 to 7, 9 to 12, 14 to 17, 19 to 22, and 24 to 27; these read SPSK, SPRK, and SPKR. Positions 9 to 49 are enriched in basic residues; that stretch reads SPRKGSPRKGSPRKGSPKRGGKGAKRAGKGGRRNVVKRRRR. 3 positions are modified to phosphoserine: S14, S19, and S24. Residue S129 is glycosylated (O-linked (GlcNAc) serine). Residue K137 forms a Glycyl lysine isopeptide (Lys-Gly) (interchain with G-Cter in ubiquitin) linkage.

This sequence belongs to the histone H2B family. The nucleosome is a histone octamer containing two molecules each of H2A, H2B, H3 and H4 assembled in one H3-H4 heterotetramer and two H2A-H2B heterodimers. The octamer wraps approximately 147 bp of DNA. In terms of processing, monoubiquitination of Lys-137 gives a specific tag for epigenetic transcriptional activation and is also prerequisite for histone H3 'Lys-4' and 'Lys-79' methylation. Phosphorylated on SPKK motifs 3, 4 and 5; which may regulate DNA binding. Dephosphorylated during maturation of spermatids to mature sperm and rephosphorylated at fertilization. Post-translationally, glcNAcylation at Ser-129 promotes monoubiquitination of Lys-137. It fluctuates in response to extracellular glucose, and associates with transcribed genes.

It localises to the nucleus. It is found in the chromosome. In terms of biological role, core component of nucleosome. Nucleosomes wrap and compact DNA into chromatin, limiting DNA accessibility to the cellular machineries which require DNA as a template. Histones thereby play a central role in transcription regulation, DNA repair, DNA replication and chromosomal stability. DNA accessibility is regulated via a complex set of post-translational modifications of histones, also called histone code, and nucleosome remodeling. This Psammechinus miliaris (Green sea urchin) protein is Histone H2B.2, sperm.